A 114-amino-acid polypeptide reads, in one-letter code: Evasin-1 (114 aa).

The N-terminal stretch at M1–C20 is a signal peptide. Intrachain disulfides connect C32/C53, C49/C90, C66/C95, and C85/C104. 3 N-linked (GlcNAc...) asparagine glycosylation sites follow: N39, N54, and N62.

The protein belongs to the evasin C8 family. As to quaternary structure, monomer.

It is found in the secreted. Functionally, salivary chemokine-binding protein which shows chemokine neutralizing activity and binds to host chemokines CCL3, CCL4 and CCL18. Binds to CCL3 with 1:1 stoichiometry. The chain is Evasin-1 from Rhipicephalus sanguineus (Brown dog tick).